Reading from the N-terminus, the 77-residue chain is Putative sulfur carrier protein YedF (77 aa).

Cysteine 17 (cysteine persulfide intermediate) is an active-site residue.

This sequence belongs to the sulfur carrier protein TusA family.

The chain is Putative sulfur carrier protein YedF (yedF) from Escherichia coli O157:H7.